The following is a 581-amino-acid chain: Bestrophin-1 (581 aa).

Residues 1–31 (MTVTYSSQVANARLGSFSRLLLCWRGSIYKL) lie on the Cytoplasmic side of the membrane. A10 serves as a coordination point for Ca(2+). A helical transmembrane segment spans residues 32–51 (LYGEFLIFLLCYYIIRFIYR). Over 52–60 (MALTDEQQV) the chain is Extracellular. A helical membrane pass occupies residues 61–82 (IFEKLTLYCDSYIQLIPISFVL). The Cytoplasmic portion of the chain corresponds to 83 to 237 (GFYVTLVVTR…DWISVPLVYT (155 aa)). Residues 238–255 (QVVTVAVYSFFLACLVGR) traverse the membrane as a helical segment. Over 256–274 (QFLNPAKAYPGHEMDLVVP) the chain is Extracellular. A helical transmembrane segment spans residues 275 to 288 (LFTFLQFFFYAGWL). The Cytoplasmic segment spans residues 289 to 581 (KVAEQLINPF…ALENRDEAHS (293 aa)). Ca(2+) is bound by residues Q293, N296, D301, and D304. Positions 416-440 (EGHFHEGHPKNLRGARLDSSDQEDS) are disordered.

Belongs to the anion channel-forming bestrophin (TC 1.A.46) family. Calcium-sensitive chloride channel subfamily. As to quaternary structure, interacts with YWHAG; this interaction promotes the ligand-gated L-glutamate channel activity leading to the positive regulation of NMDA glutamate receptor activity through the L-glutamate secretion. In terms of processing, phosphorylated (in vitro). Post-translationally, dephosphorylated (in vitro) by PP2A.

The protein localises to the cell membrane. It localises to the basolateral cell membrane. The enzyme catalyses chloride(in) = chloride(out). It carries out the reaction hydrogencarbonate(in) = hydrogencarbonate(out). The catalysed reaction is 4-aminobutanoate(in) = 4-aminobutanoate(out). It catalyses the reaction L-glutamate(out) = L-glutamate(in). Functionally, ligand-gated anion channel that allows the movement of anions across cell membranes when activated by calcium (Ca2+). Allows the movement of chloride and hydrogencarbonate. Found in a partially open conformation leading to significantly smaller chloride movement. Upon F2R/PAR-1 activation, the sequestered calcium is released into the cytosol of astrocytes, leading to the (Ca2+)-dependent release of L-glutamate into the synaptic cleft that targets the neuronal postsynaptic GRIN2A/NMDAR receptor resulting in the synaptic plasticity regulation. Upon activation of the norepinephrine-alpha-1 adrenergic receptor signaling pathway, transports as well D-serine than L-glutamate in a (Ca2+)-dependent manner, leading to activation of adjacent NMDAR receptors and therefore regulates the heterosynaptic long-term depression and metaplasticity during initial memory acquisition. Releases the 4-aminobutanoate neurotransmitter in a (Ca2+)-dependent manner, and participates in its tonic release from cerebellar glial cells. The protein is Bestrophin-1 of Sus scrofa (Pig).